A 703-amino-acid polypeptide reads, in one-letter code: Calcium-responsive transcription factor (703 aa).

Disordered stretches follow at residues 1–61 (MEQS…QNIP), 130–150 (GPLV…SDRN), and 517–539 (GNSQ…SLSP). Residues 9 to 22 (KVNHNDSEESKTDS) are compositionally biased toward basic and acidic residues. A compositionally biased stretch (polar residues) spans 23–34 (QHLTYMDSSEPS).

Its subcellular location is the nucleus. Acts as a transcriptional activator that mediates the calcium- and neuron-selective induction of BDNF exon III transcription. Binds to the consensus calcium-response element CaRE1 5'-CTATTTCGAG-3' sequence. The sequence is that of Calcium-responsive transcription factor (CARF) from Bos taurus (Bovine).